We begin with the raw amino-acid sequence, 304 residues long: Homoserine dehydrogenase (304 aa).

Positions 8, 10, 11, 38, 39, and 73 each coordinate NADP(+). An NADPH-binding site is contributed by Tyr8. 2 residues coordinate NADPH: Val11 and Arg38. Val11 provides a ligand contact to NAD(+). Positions 73, 74, 100, and 102 each coordinate NADPH. NAD(+) is bound at residue Ser73. Thr100 and Lys102 together coordinate NADP(+). Na(+) contacts are provided by Val129 and Thr133. NADP(+) is bound by residues Gly182 and Glu185. L-homoserine contacts are provided by Glu185 and Asp196. Residue Lys200 is the Proton donor of the active site. Gly284 lines the NADP(+) pocket. Position 284 (Gly284) interacts with NADPH. Gly284 serves as a coordination point for NAD(+).

Belongs to the homoserine dehydrogenase family. In terms of assembly, homodimer. Requires a metal cation as cofactor. Post-translationally, the enzyme is activated by reductive cleavage of the interchain disulfide bond between the two subunits.

It catalyses the reaction L-homoserine + NADP(+) = L-aspartate 4-semialdehyde + NADPH + H(+). The enzyme catalyses L-homoserine + NAD(+) = L-aspartate 4-semialdehyde + NADH + H(+). It functions in the pathway amino-acid biosynthesis; L-methionine biosynthesis via de novo pathway; L-homoserine from L-aspartate: step 3/3. The protein operates within amino-acid biosynthesis; L-threonine biosynthesis; L-threonine from L-aspartate: step 3/5. Inhibited by cysteine. Its function is as follows. Catalyzes the conversion of L-aspartate-beta-semialdehyde (L-Asa) to L-homoserine (L-Hse), the third step in the biosynthesis of threonine and methionine from aspartate. The chain is Homoserine dehydrogenase from Sulfurisphaera tokodaii (strain DSM 16993 / JCM 10545 / NBRC 100140 / 7) (Sulfolobus tokodaii).